A 234-amino-acid chain; its full sequence is Adenosine 5'-phosphosulfate reductase (234 aa).

C120, C121, C203, and C206 together coordinate [4Fe-4S] cluster. Catalysis depends on C229, which acts as the Nucleophile; cysteine thiosulfonate intermediate.

Belongs to the PAPS reductase family. CysH subfamily. Requires [4Fe-4S] cluster as cofactor.

The protein localises to the cytoplasm. The catalysed reaction is [thioredoxin]-disulfide + sulfite + AMP + 2 H(+) = adenosine 5'-phosphosulfate + [thioredoxin]-dithiol. Its pathway is sulfur metabolism; hydrogen sulfide biosynthesis; sulfite from sulfate. Functionally, catalyzes the formation of sulfite from adenosine 5'-phosphosulfate (APS) using thioredoxin as an electron donor. The protein is Adenosine 5'-phosphosulfate reductase of Bacillus mycoides (strain KBAB4) (Bacillus weihenstephanensis).